The following is a 179-amino-acid chain: MITGYKPHELGIFNDKHPRIGIIKKALENRLRLLLDEGLEWVIISGQQGVESWSAEVVWTLKKEFPHLKYAVITPFLEQEKNWQDPKKEKYQTIIARADFVTSITKKPYEAPWQFIEKDKFIIQNTDGLLLIYDEENEGSPKYIKRLAEKFMESHDYSLLTINAYDLQMIAEEIQQQDW.

It belongs to the UPF0398 family.

The protein is UPF0398 protein Bsph_0756 of Lysinibacillus sphaericus (strain C3-41).